A 363-amino-acid polypeptide reads, in one-letter code: Glutamate 5-kinase (363 aa).

Lysine 6 serves as a coordination point for ATP. Residues serine 46, aspartate 133, and asparagine 145 each coordinate substrate. Residues 165-166 and 207-213 contribute to the ATP site; these read TD and TGGMHTK. The 79-residue stretch at 271–349 folds into the PUA domain; it reads TGRLLLDEGA…RDIEAVLGFT (79 aa).

It belongs to the glutamate 5-kinase family.

It localises to the cytoplasm. It catalyses the reaction L-glutamate + ATP = L-glutamyl 5-phosphate + ADP. The protein operates within amino-acid biosynthesis; L-proline biosynthesis; L-glutamate 5-semialdehyde from L-glutamate: step 1/2. In terms of biological role, catalyzes the transfer of a phosphate group to glutamate to form L-glutamate 5-phosphate. This Deinococcus geothermalis (strain DSM 11300 / CIP 105573 / AG-3a) protein is Glutamate 5-kinase.